Consider the following 35-residue polypeptide: Dolichyl-diphosphooligosaccharide--protein glycosyltransferase subunit 4B (35 aa).

Residues 1 to 8 (MFDDQDLG) lie on the Lumenal side of the membrane. The helical transmembrane segment at 9–29 (FFANFLGIFIFIMVIAYHFVV) threads the bilayer. Residues 30–35 (AEPKFE) are Cytoplasmic-facing.

It belongs to the OST4 family. Component of the oligosaccharyltransferase (OST) complex.

Its subcellular location is the endoplasmic reticulum membrane. In terms of biological role, subunit of the oligosaccharyl transferase (OST) complex that catalyzes the initial transfer of a defined glycan (Glc(3)Man(9)GlcNAc(2) in eukaryotes) from the lipid carrier dolichol-pyrophosphate to an asparagine residue within an Asn-X-Ser/Thr consensus motif in nascent polypeptide chains, the first step in protein N-glycosylation. N-glycosylation occurs cotranslationally and the complex associates with the Sec61 complex at the channel-forming translocon complex that mediates protein translocation across the endoplasmic reticulum (ER). All subunits are required for a maximal enzyme activity. This is Dolichyl-diphosphooligosaccharide--protein glycosyltransferase subunit 4B (OST4B) from Arabidopsis thaliana (Mouse-ear cress).